The chain runs to 228 residues: Cytochrome c oxidase subunit 2 (228 aa).

Residues 1–26 (MTTWANMNLQDSASPIMEQLIYFHDH) lie on the Mitochondrial intermembrane side of the membrane. A helical membrane pass occupies residues 27 to 48 (ALMIIIMILMVVSYMMIAMVFN). Topologically, residues 49 to 62 (KYINRFLLEGQMIE) are mitochondrial matrix. The chain crosses the membrane as a helical span at residues 63–82 (LAWTIAPAVILIFIAVPSLR). Residues 83–228 (LLYLMDEINT…FINWILKMNM (146 aa)) are Mitochondrial intermembrane-facing. Residues His-161, Cys-196, Glu-198, Cys-200, His-204, and Met-207 each contribute to the Cu cation site. Glu-198 is a binding site for Mg(2+).

The protein belongs to the cytochrome c oxidase subunit 2 family. In terms of assembly, component of the cytochrome c oxidase (complex IV, CIV), a multisubunit enzyme composed of a catalytic core of 3 subunits and several supernumerary subunits. The complex exists as a monomer or a dimer and forms supercomplexes (SCs) in the inner mitochondrial membrane with ubiquinol-cytochrome c oxidoreductase (cytochrome b-c1 complex, complex III, CIII). Cu cation serves as cofactor.

Its subcellular location is the mitochondrion inner membrane. It carries out the reaction 4 Fe(II)-[cytochrome c] + O2 + 8 H(+)(in) = 4 Fe(III)-[cytochrome c] + 2 H2O + 4 H(+)(out). In terms of biological role, component of the cytochrome c oxidase, the last enzyme in the mitochondrial electron transport chain which drives oxidative phosphorylation. The respiratory chain contains 3 multisubunit complexes succinate dehydrogenase (complex II, CII), ubiquinol-cytochrome c oxidoreductase (cytochrome b-c1 complex, complex III, CIII) and cytochrome c oxidase (complex IV, CIV), that cooperate to transfer electrons derived from NADH and succinate to molecular oxygen, creating an electrochemical gradient over the inner membrane that drives transmembrane transport and the ATP synthase. Cytochrome c oxidase is the component of the respiratory chain that catalyzes the reduction of oxygen to water. Electrons originating from reduced cytochrome c in the intermembrane space (IMS) are transferred via the dinuclear copper A center (CU(A)) of subunit 2 and heme A of subunit 1 to the active site in subunit 1, a binuclear center (BNC) formed by heme A3 and copper B (CU(B)). The BNC reduces molecular oxygen to 2 water molecules using 4 electrons from cytochrome c in the IMS and 4 protons from the mitochondrial matrix. The chain is Cytochrome c oxidase subunit 2 (COII) from Periplaneta americana (American cockroach).